The primary structure comprises 313 residues: Maintenance of mitochondrial morphology protein 1 (313 aa).

Over 1–12 (MIHLPQGSFTQG) the chain is Lumenal. Residues 13–33 (LIVGQLLTLAIIYVFLRFFLF) traverse the membrane as a helical segment. Residues 34-313 (CSPIPKSVAN…APQEESSNED (280 aa)) are Cytoplasmic-facing. The span at 42 to 63 (ANSPKQTGNETPDETPSTPLSN) shows a compositional bias: polar residues. Residues 42-65 (ANSPKQTGNETPDETPSTPLSNNK) form a disordered region. One can recognise an SMP-LTD domain in the interval 90–288 (EPESLDWFNV…SPQFQQIAIP (199 aa)).

This sequence belongs to the MMM1 family. Homodimer. Component of the ER-mitochondria encounter structure (ERMES) or MDM complex, composed of mmm1, mdm10, mdm12 and mdm34. A mmm1 homodimer associates with one molecule of mdm12 on each side in a pairwise head-to-tail manner, and the SMP-LTD domains of mmm1 and mdm12 generate a continuous hydrophobic tunnel for phospholipid trafficking.

Its subcellular location is the endoplasmic reticulum membrane. Its function is as follows. Component of the ERMES/MDM complex, which serves as a molecular tether to connect the endoplasmic reticulum (ER) and mitochondria. Components of this complex are involved in the control of mitochondrial shape and protein biogenesis, and function in nonvesicular lipid trafficking between the ER and mitochondria. The mdm12-mmm1 subcomplex functions in the major beta-barrel assembly pathway that is responsible for biogenesis of all outer membrane beta-barrel proteins, and acts in a late step after the SAM complex. The mdm10-mdm12-mmm1 subcomplex further acts in the TOM40-specific pathway after the action of the mdm12-mmm1 complex. Essential for establishing and maintaining the structure of mitochondria and maintenance of mtDNA nucleoids. The sequence is that of Maintenance of mitochondrial morphology protein 1 from Schizosaccharomyces pombe (strain 972 / ATCC 24843) (Fission yeast).